Reading from the N-terminus, the 185-residue chain is Anaphase-promoting complex subunit 10 (185 aa).

Thr2 carries the post-translational modification N-acetylthreonine. Residues 2-185 (TTPNKTPPGA…IDFMMYRSIR (184 aa)) enclose the DOC domain. Position 169 is an N6-acetyllysine (Lys169).

It belongs to the APC10 family. In terms of assembly, the mammalian APC/C is composed at least of 14 distinct subunits ANAPC1, ANAPC2, CDC27/APC3, ANAPC4, ANAPC5, CDC16/APC6, ANAPC7, CDC23/APC8, ANAPC10, ANAPC11, CDC26/APC12, ANAPC13, ANAPC15 and ANAPC16 that assemble into a complex of at least 19 chains with a combined molecular mass of around 1.2 MDa; APC/C interacts with FZR1 and FBXO5. The C-terminus of APC10 binds to CDC27/APC3. Interacts with PIWIL1; interaction only takes place when PIWIL1 binds piRNA. Interacts with FBXO43; the interaction is direct.

It functions in the pathway protein modification; protein ubiquitination. Functionally, component of the anaphase promoting complex/cyclosome (APC/C), a cell cycle-regulated E3 ubiquitin ligase that controls progression through mitosis and the G1 phase of the cell cycle. The APC/C complex acts by mediating ubiquitination and subsequent degradation of target proteins: it mainly mediates the formation of 'Lys-11'-linked polyubiquitin chains and, to a lower extent, the formation of 'Lys-48'- and 'Lys-63'-linked polyubiquitin chains. The APC/C complex catalyzes assembly of branched 'Lys-11'-/'Lys-48'-linked branched ubiquitin chains on target proteins. This is Anaphase-promoting complex subunit 10 (ANAPC10) from Homo sapiens (Human).